The following is a 293-amino-acid chain: Elongation factor Ts (293 aa).

An involved in Mg(2+) ion dislocation from EF-Tu region spans residues 80 to 83; it reads TDFV.

This sequence belongs to the EF-Ts family.

It is found in the cytoplasm. Associates with the EF-Tu.GDP complex and induces the exchange of GDP to GTP. It remains bound to the aminoacyl-tRNA.EF-Tu.GTP complex up to the GTP hydrolysis stage on the ribosome. The polypeptide is Elongation factor Ts (Burkholderia pseudomallei (strain 1106a)).